The chain runs to 480 residues: MRALPLSIGTIHFVGIGGIGMSGIAEVLHMLGYAVQGSDIAENANVQRLRAAGITVAIGHDAANLGAAQVVVTSTAVRRDNPEVVAARARLIPVVRRAEMLAELMRLRWAVAVGGTHGKTTTTSLIAAVLEAARLDPTVINGGIIEAYGTNTRMGSGDWMVVEADESDGSFLRLPSVITVVTNMDPEHLDHWGTAEAMQAAYDQFVSNIPFYGFAVLCIDHPAVQQMIPRLSDHRIVTYGFSPQADIRAEKVITDKLGATFEVVVTNRNRNRTRRAGPFRLPMLGHHNVQNALAAIAVGVEMDIDDATLRSAFAGFRGVKRRFTRTGETGGITVIDDYGHHPVEIAAVLKAARQAGARDVIAVVQPHRYSRLQTLFGEFCTCMNDAGTVIVADVYAAGEAPIPGVDRDALVEGLRERGHRSVVPLPDPEHLAEMVHAIARPGDFVVCLGAGSITNWAQALPGQLAALQNPAAARKGECAA.

115–121 (GTHGKTT) contacts ATP.

The protein belongs to the MurCDEF family.

The protein resides in the cytoplasm. The catalysed reaction is UDP-N-acetyl-alpha-D-muramate + L-alanine + ATP = UDP-N-acetyl-alpha-D-muramoyl-L-alanine + ADP + phosphate + H(+). Its pathway is cell wall biogenesis; peptidoglycan biosynthesis. Functionally, cell wall formation. The polypeptide is UDP-N-acetylmuramate--L-alanine ligase (Gluconacetobacter diazotrophicus (strain ATCC 49037 / DSM 5601 / CCUG 37298 / CIP 103539 / LMG 7603 / PAl5)).